The following is a 290-amino-acid chain: MVKVEIDEGSGFCFGVVTAIHKAEEELAKGVTLYCLGDIVHNSREVERLKEMGLITINHEEFKQLHNAKVLLRAHGEPPETYIIAKENNIEIIDATCPVVLRLQKRIKQEYMQEDLDEKQIVIYGKNGHAEVLGLVGQTTGKAIVIEKLDEARRLDFSKSIRLYSQTTKSLDEFWEIVEYIKEHISPDVTFEYYDTICRQVANRMPNLRKFAASHDLIFFVSGKKSSNGKMLFEECKKVNPNSHLIDSADEIDDSLLPGVNSIGVCGATSTPKWLMEEISEAIKAQIKRQ.

Position 13 (Cys-13) interacts with [4Fe-4S] cluster. Residues His-41 and His-75 each coordinate (2E)-4-hydroxy-3-methylbut-2-enyl diphosphate. Residues His-41 and His-75 each coordinate dimethylallyl diphosphate. Residues His-41 and His-75 each contribute to the isopentenyl diphosphate site. Cys-97 provides a ligand contact to [4Fe-4S] cluster. Residue His-129 coordinates (2E)-4-hydroxy-3-methylbut-2-enyl diphosphate. Residue His-129 participates in dimethylallyl diphosphate binding. His-129 provides a ligand contact to isopentenyl diphosphate. The active-site Proton donor is the Glu-131. Thr-167 contributes to the (2E)-4-hydroxy-3-methylbut-2-enyl diphosphate binding site. Residue Cys-198 coordinates [4Fe-4S] cluster. (2E)-4-hydroxy-3-methylbut-2-enyl diphosphate-binding residues include Ser-226, Ser-227, Asn-228, and Ser-270. The dimethylallyl diphosphate site is built by Ser-226, Ser-227, Asn-228, and Ser-270. Isopentenyl diphosphate contacts are provided by Ser-226, Ser-227, Asn-228, and Ser-270.

It belongs to the IspH family. Requires [4Fe-4S] cluster as cofactor.

It catalyses the reaction isopentenyl diphosphate + 2 oxidized [2Fe-2S]-[ferredoxin] + H2O = (2E)-4-hydroxy-3-methylbut-2-enyl diphosphate + 2 reduced [2Fe-2S]-[ferredoxin] + 2 H(+). The enzyme catalyses dimethylallyl diphosphate + 2 oxidized [2Fe-2S]-[ferredoxin] + H2O = (2E)-4-hydroxy-3-methylbut-2-enyl diphosphate + 2 reduced [2Fe-2S]-[ferredoxin] + 2 H(+). It participates in isoprenoid biosynthesis; dimethylallyl diphosphate biosynthesis; dimethylallyl diphosphate from (2E)-4-hydroxy-3-methylbutenyl diphosphate: step 1/1. The protein operates within isoprenoid biosynthesis; isopentenyl diphosphate biosynthesis via DXP pathway; isopentenyl diphosphate from 1-deoxy-D-xylulose 5-phosphate: step 6/6. In terms of biological role, catalyzes the conversion of 1-hydroxy-2-methyl-2-(E)-butenyl 4-diphosphate (HMBPP) into a mixture of isopentenyl diphosphate (IPP) and dimethylallyl diphosphate (DMAPP). Acts in the terminal step of the DOXP/MEP pathway for isoprenoid precursor biosynthesis. This Bacteroides fragilis (strain ATCC 25285 / DSM 2151 / CCUG 4856 / JCM 11019 / LMG 10263 / NCTC 9343 / Onslow / VPI 2553 / EN-2) protein is 4-hydroxy-3-methylbut-2-enyl diphosphate reductase.